The sequence spans 196 residues: ECF RNA polymerase sigma factor SigM (196 aa).

The sigma-70 factor domain-2 stretch occupies residues 39–105 (LFRRHHRQLH…ACLDRLRRAK (67 aa)). Positions 63–66 (DALQ) match the Interaction with polymerase core subunit RpoC motif. Residues 130 to 181 (AVQRALMRLPVEQRAAVVAVDMQGYSIADTARMLGVAEGTVKSRCARARARL) are sigma-70 factor domain-4. A DNA-binding region (H-T-H motif) is located at residues 156–175 (IADTARMLGVAEGTVKSRCA).

It belongs to the sigma-70 factor family. ECF subfamily. As to quaternary structure, interacts transiently with the RNA polymerase catalytic core formed by RpoA, RpoB, RpoC and RpoZ (2 alpha, 1 beta, 1 beta' and 1 omega subunit) to form the RNA polymerase holoenzyme that can initiate transcription. Interacts (via sigma-70 factor domain 4) with anti-sigma-M factor RsmA.

Functionally, sigma factors are initiation factors that promote the attachment of RNA polymerase to specific initiation sites and are then released. Extracytoplasmic function (ECF) sigma factors are held in an inactive form by an anti-sigma factor until released by regulated intramembrane proteolysis. The protein is ECF RNA polymerase sigma factor SigM (sigM) of Mycobacterium tuberculosis (strain ATCC 35801 / TMC 107 / Erdman).